Reading from the N-terminus, the 69-residue chain is Alpha-conotoxin SrIA/SrIB (69 aa).

Residues 1–21 (MGMRMMFTVFLLVVLATTVVS) form the signal peptide. Positions 22–48 (FTSDSAFDSRNVAANDKVSDMIALTAR) are excised as a propeptide. Intrachain disulfides connect C51/C57 and C52/C65. Positions 53-55 (SRP) are ser-Xaa-Pro motif, crucial for potent interaction with nAChR. P55 is subject to 4-hydroxyproline; in form Sr1A and Sr1B. 4-carboxyglutamate; in form Sr1A is present on E60. E63 bears the 4-carboxyglutamate; in form Sr1A and Sr1B mark. G66 carries the post-translational modification Glycine amide; in form Sr1A and Sr1B.

The protein belongs to the conotoxin A superfamily. Occurs in 2 forms which differ in the post-translational modification of Glu-60. In form SrA1 Glu-60 is 4-carboxyglutamate while in form SrA2 Glu-60 is unmodified. As to expression, expressed by the venom duct.

It is found in the secreted. Functionally, alpha-conotoxins act on postsynaptic membranes, they bind to the nicotinic acetylcholine receptors (nAChR) and thus inhibit them. Has weak blocking effects on muscle nAChR composed of alpha-1/beta-1/gamma/delta subunits and the central nervous system nAChR composed of alpha-4/beta-2 subunits. Does not detectably affect the peripheral nervous system nAChR composed of alpha-3/beta-4 subunits. Low toxin concentrations potentiate currents in muscle nAChR composed of alpha-1/beta-1/gamma/delta subunits and central nervous system nAChR composed of alpha-4/beta-2 subunits, but not the peripheral nervous system nAChR composed of alpha-3/beta-4 subunits. This is Alpha-conotoxin SrIA/SrIB from Conus spurius (Alphabet cone).